The following is a 289-amino-acid chain: Phosphatidylglycerol--prolipoprotein diacylglyceryl transferase (289 aa).

3 consecutive transmembrane segments (helical) span residues 13–33 (LGPL…LLGW), 61–81 (FILW…VLFY), and 99–119 (GGMS…LFAM). Arginine 144 lines the a 1,2-diacyl-sn-glycero-3-phospho-(1'-sn-glycerol) pocket. A run of 2 helical transmembrane segments spans residues 218–238 (GVVM…LENV) and 250–270 (LGLT…LWLI).

This sequence belongs to the Lgt family.

The protein localises to the cell inner membrane. It carries out the reaction L-cysteinyl-[prolipoprotein] + a 1,2-diacyl-sn-glycero-3-phospho-(1'-sn-glycerol) = an S-1,2-diacyl-sn-glyceryl-L-cysteinyl-[prolipoprotein] + sn-glycerol 1-phosphate + H(+). It functions in the pathway protein modification; lipoprotein biosynthesis (diacylglyceryl transfer). Its function is as follows. Catalyzes the transfer of the diacylglyceryl group from phosphatidylglycerol to the sulfhydryl group of the N-terminal cysteine of a prolipoprotein, the first step in the formation of mature lipoproteins. The sequence is that of Phosphatidylglycerol--prolipoprotein diacylglyceryl transferase from Phenylobacterium zucineum (strain HLK1).